Consider the following 184-residue polypeptide: MGISRDSRHKRRLTGGRYPVHKKKRKYELGRPSSNTKLGSRLVRKVRCRGGNLKFRALRLDSGNFSWGSQNVTRKTRVMDVVYNASSNELVRTKTLVKNAIVTVDPTPFKLWFKTHYGVELEDPQASEKVAGLVPKTLLEQFSSGRLLACISSRPGQCGRCDGYVLEGEELNFYRRRMDKKKRV.

The tract at residues 1–23 (MGISRDSRHKRRLTGGRYPVHKK) is disordered. The segment covering 7–23 (SRHKRRLTGGRYPVHKK) has biased composition (basic residues).

It belongs to the eukaryotic ribosomal protein eS8 family.

The protein is Small ribosomal subunit protein eS8 (RPS8) of Theileria annulata.